The chain runs to 320 residues: Protease HtpX homolog (320 aa).

Transmembrane regions (helical) follow at residues 6 to 26 (TAMLLAFMTALFMFVGFLIGG) and 28 to 48 (AGMMIAFVIAAGMNFFSYWNS). H130 provides a ligand contact to Zn(2+). E131 is an active-site residue. Position 134 (H134) interacts with Zn(2+). A run of 2 helical transmembrane segments spans residues 145-165 (ITATLAGAISMLGNFAFFFGG) and 173-193 (PLGFVGVLVAMIVAPLAAMLV). E202 is a Zn(2+) binding site. The disordered stretch occupies residues 281–320 (GGMNVSTPPVRAANPSRKSRSVPDTGLGRGGSQPPKGPWS).

Belongs to the peptidase M48B family. The cofactor is Zn(2+).

The protein resides in the cell inner membrane. This Rhizobium leguminosarum bv. trifolii (strain WSM2304) protein is Protease HtpX homolog.